Consider the following 870-residue polypeptide: Disks large homolog 2 (870 aa).

2 S-palmitoyl cysteine lipidation sites follow: C5 and C7. At S28 the chain carries Phosphoserine. A Phosphotyrosine modification is found at Y58. At S65 the chain carries Phosphoserine. PDZ domains follow at residues 98 to 184 and 193 to 279; these read EITL…VRRR and EIKL…VGKP. 6 positions are modified to phosphoserine: S307, S328, S360, S365, S406, and S414. The PDZ 3 domain occupies 421 to 501; sequence KVVLHKGSTG…QTVTIIAQYQ (81 aa). At Y505 the chain carries Phosphotyrosine. Residues S528, S530, S553, S627, and S635 each carry the phosphoserine modification. The 71-residue stretch at 536 to 606 folds into the SH3 domain; it reads KRSLYVRAMF…PSKRRVERKE (71 aa). A Guanylate kinase-like domain is found at 680–855; the sequence is TRPVIILGPM…IYNQCKLVIE (176 aa). Residues Y750 and Y755 each carry the phosphotyrosine modification.

The protein belongs to the MAGUK family. As to quaternary structure, interacts through its PDZ domains with NETO1. Interacts with NOS1/nNOS through second PDZ domain. Interacts with KCNJ2/Kir2.1 (via C-terminus) through one of its PDZ domains. Interacts with KCNJ4, Interacts with FRMPD4 (via C-terminus). Interacts with LRFN1, LRFN2 and LRFN4. Interacts with FASLG. Interacts with KCNJ4. Interacts with ADAM22. Interacts with DGKI (via PDZ-binding motif). Post-translationally, palmitoylation of isoform 1 is not required for targeting to postsynaptic density.

It localises to the cell membrane. The protein resides in the postsynaptic density. The protein localises to the synapse. It is found in the membrane. Its subcellular location is the cell projection. It localises to the axon. The protein resides in the perikaryon. Required for perception of chronic pain through NMDA receptor signaling. Regulates surface expression of NMDA receptors in dorsal horn neurons of the spinal cord. Interacts with the cytoplasmic tail of NMDA receptor subunits as well as inward rectifying potassium channels. Involved in regulation of synaptic stability at cholinergic synapses. Part of the postsynaptic protein scaffold of excitatory synapses. This chain is Disks large homolog 2 (DLG2), found in Homo sapiens (Human).